Reading from the N-terminus, the 131-residue chain is Large ribosomal subunit protein bL17 (131 aa).

Belongs to the bacterial ribosomal protein bL17 family. As to quaternary structure, part of the 50S ribosomal subunit. Contacts protein L32.

In Shewanella oneidensis (strain ATCC 700550 / JCM 31522 / CIP 106686 / LMG 19005 / NCIMB 14063 / MR-1), this protein is Large ribosomal subunit protein bL17.